Consider the following 284-residue polypeptide: uncharacterized protein (284 aa).

An N-terminal signal peptide occupies residues 1–21; it reads MKTTMLMLVLLVCSYIHYVCA. The next 3 membrane-spanning stretches (helical) occupy residues 88–108, 144–164, and 212–232; these read AGPF…FLWA, ALGV…LGVW, and VFTT…SPTY.

It is found in the membrane. This is an uncharacterized protein from Schizosaccharomyces pombe (strain 972 / ATCC 24843) (Fission yeast).